We begin with the raw amino-acid sequence, 196 residues long: ATP-dependent Clp protease proteolytic subunit (196 aa).

Catalysis depends on serine 99, which acts as the Nucleophile. Residue histidine 124 is part of the active site.

It belongs to the peptidase S14 family. As to quaternary structure, fourteen ClpP subunits assemble into 2 heptameric rings which stack back to back to give a disk-like structure with a central cavity, resembling the structure of eukaryotic proteasomes.

Its subcellular location is the cytoplasm. The enzyme catalyses Hydrolysis of proteins to small peptides in the presence of ATP and magnesium. alpha-casein is the usual test substrate. In the absence of ATP, only oligopeptides shorter than five residues are hydrolyzed (such as succinyl-Leu-Tyr-|-NHMec, and Leu-Tyr-Leu-|-Tyr-Trp, in which cleavage of the -Tyr-|-Leu- and -Tyr-|-Trp bonds also occurs).. Functionally, cleaves peptides in various proteins in a process that requires ATP hydrolysis. Has a chymotrypsin-like activity. Plays a major role in the degradation of misfolded proteins. This chain is ATP-dependent Clp protease proteolytic subunit, found in Campylobacter lari (strain RM2100 / D67 / ATCC BAA-1060).